We begin with the raw amino-acid sequence, 367 residues long: UDP-N-acetylglucosamine--N-acetylmuramyl-(pentapeptide) pyrophosphoryl-undecaprenol N-acetylglucosamine transferase (367 aa).

UDP-N-acetyl-alpha-D-glucosamine contacts are provided by residues 15-17 (TGG), Asn127, Arg163, Ser191, Ile249, and Gln294.

This sequence belongs to the glycosyltransferase 28 family. MurG subfamily.

The protein localises to the cell inner membrane. It carries out the reaction di-trans,octa-cis-undecaprenyl diphospho-N-acetyl-alpha-D-muramoyl-L-alanyl-D-glutamyl-meso-2,6-diaminopimeloyl-D-alanyl-D-alanine + UDP-N-acetyl-alpha-D-glucosamine = di-trans,octa-cis-undecaprenyl diphospho-[N-acetyl-alpha-D-glucosaminyl-(1-&gt;4)]-N-acetyl-alpha-D-muramoyl-L-alanyl-D-glutamyl-meso-2,6-diaminopimeloyl-D-alanyl-D-alanine + UDP + H(+). The protein operates within cell wall biogenesis; peptidoglycan biosynthesis. Cell wall formation. Catalyzes the transfer of a GlcNAc subunit on undecaprenyl-pyrophosphoryl-MurNAc-pentapeptide (lipid intermediate I) to form undecaprenyl-pyrophosphoryl-MurNAc-(pentapeptide)GlcNAc (lipid intermediate II). The protein is UDP-N-acetylglucosamine--N-acetylmuramyl-(pentapeptide) pyrophosphoryl-undecaprenol N-acetylglucosamine transferase of Burkholderia cenocepacia (strain HI2424).